The primary structure comprises 762 residues: PHD finger protein 20-like protein 1 (762 aa).

2 consecutive Tudor domains span residues 11 to 71 (ITFE…LERP) and 85 to 141 (VDFK…EDAK). Disordered regions lie at residues 178–231 (AKNK…TSSD), 289–359 (AEKK…CIKP), 383–411 (SVINKTSPSQPLNSPRSYKHSQRRRRSQR), 536–559 (SLKLPKGSSKKKRSSTSVSSEGTE), and 613–651 (LSGKKKEKEKEKKEKKEKDHKSKQKKKKKKKKKSKQHDY). Residues 193–211 (NKDKEERKWLKVPSKKEET) show a composition bias toward basic and acidic residues. 2 stretches are compositionally biased toward polar residues: residues 319 to 340 (DISSSANIQKPALLSSTLSSGK) and 383 to 398 (SVINKTSPSQPLNSPR). Over residues 399-410 (SYKHSQRRRRSQ) the composition is skewed to basic residues. The segment covering 614-632 (SGKKKEKEKEKKEKKEKDH) has biased composition (basic and acidic residues). The span at 633 to 647 (KSKQKKKKKKKKKSK) shows a compositional bias: basic residues.

It localises to the nucleus. Functionally, is a negative regulator of proteasomal degradation of methylated proteins. Involved in the maintainance of pluripotency of embryonic stem cells. The chain is PHD finger protein 20-like protein 1 (PHF20L1) from Gallus gallus (Chicken).